Reading from the N-terminus, the 338-residue chain is tRNA(Ile)-lysidine synthase (338 aa).

23–28 (SGGLDS) provides a ligand contact to ATP.

It belongs to the tRNA(Ile)-lysidine synthase family.

It is found in the cytoplasm. It carries out the reaction cytidine(34) in tRNA(Ile2) + L-lysine + ATP = lysidine(34) in tRNA(Ile2) + AMP + diphosphate + H(+). In terms of biological role, ligates lysine onto the cytidine present at position 34 of the AUA codon-specific tRNA(Ile) that contains the anticodon CAU, in an ATP-dependent manner. Cytidine is converted to lysidine, thus changing the amino acid specificity of the tRNA from methionine to isoleucine. This is tRNA(Ile)-lysidine synthase from Helicobacter pylori (strain J99 / ATCC 700824) (Campylobacter pylori J99).